The sequence spans 604 residues: Prostaglandin G/H synthase 2 (604 aa).

The signal sequence occupies residues 1–17 (MLARALLLCAAVALSHA). In terms of domain architecture, EGF-like spans 18–55 (ANPCCSNPCQNRGVCMTMGFDQYKCDCTRTGFYGENCS). 4 disulfide bridges follow: cysteine 21–cysteine 32, cysteine 22–cysteine 145, cysteine 26–cysteine 42, and cysteine 44–cysteine 54. Asparagine 53 is a glycosylation site (N-linked (GlcNAc...) asparagine). Residue arginine 106 participates in substrate binding. The N-linked (GlcNAc...) asparagine glycan is linked to asparagine 130. Histidine 193 serves as the catalytic Proton acceptor. Position 341 (tyrosine 341) interacts with substrate. Residue tyrosine 371 is the For cyclooxygenase activity of the active site. Position 374 (histidine 374) interacts with heme b. An N-linked (GlcNAc...) asparagine glycan is attached at asparagine 396. Cysteine 526 is subject to S-nitrosocysteine. The cysteines at positions 555 and 561 are disulfide-linked. Position 565 is an O-acetylserine (serine 565). Residue asparagine 580 is glycosylated (N-linked (GlcNAc...) asparagine).

Belongs to the prostaglandin G/H synthase family. In terms of assembly, homodimer. It depends on heme b as a cofactor. S-nitrosylation by NOS2 (iNOS) activates enzyme activity. S-nitrosylation may take place on different Cys residues in addition to Cys-526. In terms of processing, acetylated at Ser-565 by SPHK1. During neuroinflammation, acetylation by SPHK1 promotes neuronal secretion of specialized preresolving mediators (SPMs), especially 15-R-lipoxin A4, which results in an increase of phagocytic microglia. As to expression, highest expression in kidney and urinary bladder.

The protein localises to the microsome membrane. It is found in the endoplasmic reticulum membrane. The protein resides in the nucleus inner membrane. It localises to the nucleus outer membrane. The enzyme catalyses (5Z,8Z,11Z,14Z)-eicosatetraenoate + AH2 + 2 O2 = prostaglandin H2 + A + H2O. It carries out the reaction (5Z,8Z,11Z,14Z)-eicosatetraenoate + 2 O2 = prostaglandin G2. The catalysed reaction is prostaglandin G2 + AH2 = prostaglandin H2 + A + H2O. It catalyses the reaction (5Z,8Z,11Z,14Z,17Z)-eicosapentaenoate + 2 O2 = prostaglandin G3. The enzyme catalyses prostaglandin G3 + AH2 = prostaglandin H3 + A + H2O. It carries out the reaction (8Z,11Z,14Z)-eicosatrienoate + 2 O2 = prostaglandin G1. The catalysed reaction is prostaglandin G1 + AH2 = prostaglandin H1 + A + H2O. It catalyses the reaction 2-(5Z,8Z,11Z,14Z)-eicosatetraenoyl-sn-glycero-3-phosphoethanolamine + 2 O2 = 2-(prostaglandin G2)-sn-glycero-3-phosphoethanolamine. The enzyme catalyses 2-(prostaglandin G2)-sn-glycero-3-phosphoethanolamine + AH2 = 2-(prostaglandin H2)-sn-glycero-3-phosphoethanolamine + A + H2O. It carries out the reaction 2-(5Z,8Z,11Z,14Z)-eicosatetraenoyl-sn-glycero-3-phosphocholine + 2 O2 = 2-(prostaglandin G2)-sn-glycero-3-phosphocholine. The catalysed reaction is 2-(prostaglandin G2)-sn-glycero-3-phosphocholine + AH2 = 2-(prostaglandin H2)-sn-glycero-3-phosphocholine + A + H2O. It catalyses the reaction (15S)-hydroperoxy-(5Z,8Z,11Z,13E)-eicosatetraenoate + AH2 = (15S)-hydroxy-(5Z,8Z,11Z,13E)-eicosatetraenoate + A + H2O. The enzyme catalyses 2-(5Z,8Z,11Z,14Z)-eicosatetraenoyl-sn-glycero-3-phosphocholine + AH2 + O2 = 2-[(15S)-hydroxy-(5Z,8Z,11Z,13E)-eicosatetraenoyl]-sn-glycero-3-phosphocholine + A + H2O. It carries out the reaction 2-(5Z,8Z,11Z,14Z)-eicosatetraenoyl-sn-glycero-3-phosphocholine + AH2 + O2 = 2-[(15R)-hydroxy-(5Z,8Z,11Z,13E)-eicosatetraenoyl]-sn-glycero-3-phosphocholine + A + H2O. The catalysed reaction is 2-(5Z,8Z,11Z,14Z)-eicosatetraenoyl-sn-glycero-3-phosphocholine + AH2 + O2 = 2-[(11R)-hydroxy-(5Z,8Z,12E,14Z)-eicosatetraenoyl]-sn-glycero-3-phosphocholine + A + H2O. It catalyses the reaction (9Z,12Z)-octadecadienoate + AH2 + O2 = 9-hydroxy-(10E,12Z)-octadecadienoate + A + H2O. The enzyme catalyses (9Z,12Z)-octadecadienoate + AH2 + O2 = 13-hydroxy-(9Z,11E)-octadecadienoate + A + H2O. It carries out the reaction (5Z,8Z,11Z,14Z)-eicosatetraenoate + AH2 + O2 = (15R)-hydroxy-(5Z,8Z,11Z,13E)-eicosatetraenoate + A + H2O. The catalysed reaction is (5Z,8Z,11Z,14Z)-eicosatetraenoate + AH2 + O2 = (11R)-hydroxy-(5Z,8Z,12E,14Z)-eicosatetraenoate + A + H2O. It catalyses the reaction (5Z,8Z,11Z,14Z,17Z)-eicosapentaenoate + AH2 + O2 = (11R)-hydroxy-(5Z,8Z,12E,14Z,17Z)-eicosapentaenoate + A + H2O. The enzyme catalyses (5Z,8Z,11Z,14Z,17Z)-eicosapentaenoate + AH2 + O2 = (18S)-hydroxy-(5Z,8Z,11Z,14Z,16E)-eicosapentaenoate + A + H2O. It carries out the reaction (5Z,8Z,11Z,14Z,17Z)-eicosapentaenoate + AH2 + O2 = (18R)-hydroxy-(5Z,8Z,11Z,14Z,16E)-eicosapentaenoate + A + H2O. The catalysed reaction is (5Z,8Z,11Z,14Z,17Z)-eicosapentaenoate + AH2 + O2 = (15R)-hydroxy-(5Z,8Z,11Z,13E,17Z)-eicosapentaenoate + A + H2O. It catalyses the reaction (5Z,8Z,11Z,14Z,17Z)-eicosapentaenoate + AH2 + O2 = (15S)-hydroxy-(5Z,8Z,11Z,13E,17Z)-eicosapentaenoate + A + H2O. The enzyme catalyses (7Z,10Z,13Z,16Z,19Z)-docosapentaenoate + AH2 + O2 = 13R-hydroxy-(7Z,10Z,14E,16Z,19Z)-docosapentaenoate + A + H2O. It carries out the reaction (4Z,7Z,10Z,13Z,16Z,19Z)-docosahexaenoate + AH2 + O2 = 13-hydroxy-(4Z,7Z,10Z,14E,16Z,19Z)-docosahexaenoate + A + H2O. The catalysed reaction is (5S)-hydroxy-(6E,8Z,11Z,14Z)-eicosatetraenoate + AH2 + O2 = (5S,15R)-dihydroxy-(6E,8Z,11Z,13E)-eicosatetraenoate + A + H2O. It catalyses the reaction (4Z,7Z,10Z,13Z,16Z,19Z)-docosahexaenoate + AH2 + O2 = 17R-hydroxy-(4Z,7Z,10Z,13Z,15E,19Z)-docosahexaenoate + A + H2O. The enzyme catalyses (5S)-hydroxy-(6E,8Z,11Z,14Z)-eicosatetraenoate + AH2 + O2 = (5S,15S)-dihydroxy-(6E,8Z,11Z,13E)-eicosatetraenoate + A + H2O. It carries out the reaction (5S)-hydroxy-(6E,8Z,11Z,14Z)-eicosatetraenoate + AH2 + O2 = (5S,11R)-dihydroxy-(6E,8Z,12E,14Z)-eicosatetraenoate + A + H2O. The catalysed reaction is 2-(5Z,8Z,11Z,14Z-eicosatetraenoyl)-glycerol + 2 O2 = 2-glyceryl-prostaglandin G2. It catalyses the reaction 2-glyceryl-prostaglandin G2 + AH2 = 2-glyceryl-prostaglandin H2 + A + H2O. The enzyme catalyses (5Z,8Z,11Z,14Z)-eicosatetraenoate + O2 = (15R)-hydroperoxy-(5Z,8Z,11Z,13E)-eicosatetraenoate. It carries out the reaction (5Z,8Z,11Z,14Z)-eicosatetraenoate + O2 = 11R-hydroperoxy-(5Z,8Z,12E,14Z)-eicosatetraenoate. The catalysed reaction is (9Z,12Z)-octadecadienoate + AH2 + O2 = (9R)-hydroxy-(10E,12Z)-octadecadienoate + A + H2O. It catalyses the reaction (9Z,12Z)-octadecadienoate + AH2 + O2 = (9S)-hydroxy-(10E,12Z)-octadecadienoate + A + H2O. The enzyme catalyses (9Z,12Z)-octadecadienoate + AH2 + O2 = (13S)-hydroxy-(9Z,11E)-octadecadienoate + A + H2O. It carries out the reaction (9Z,12Z)-octadecadienoate + AH2 + O2 = (13R)-hydroxy-(9Z,11E)-octadecadienoate + A + H2O. It participates in lipid metabolism; prostaglandin biosynthesis. Dual cyclooxygenase and peroxidase in the biosynthesis pathway of prostanoids, a class of C20 oxylipins mainly derived from arachidonate ((5Z,8Z,11Z,14Z)-eicosatetraenoate, AA, C20:4(n-6)), with a particular role in the inflammatory response. The cyclooxygenase activity oxygenates AA to the hydroperoxy endoperoxide prostaglandin G2 (PGG2), and the peroxidase activity reduces PGG2 to the hydroxy endoperoxide prostaglandin H2 (PGH2), the precursor of all 2-series prostaglandins and thromboxanes. This complex transformation is initiated by abstraction of hydrogen at carbon 13 (with S-stereochemistry), followed by insertion of molecular O2 to form the endoperoxide bridge between carbon 9 and 11 that defines prostaglandins. The insertion of a second molecule of O2 (bis-oxygenase activity) yields a hydroperoxy group in PGG2 that is then reduced to PGH2 by two electrons. Similarly catalyzes successive cyclooxygenation and peroxidation of dihomo-gamma-linoleate (DGLA, C20:3(n-6)) and eicosapentaenoate (EPA, C20:5(n-3)) to corresponding PGH1 and PGH3, the precursors of 1- and 3-series prostaglandins. In an alternative pathway of prostanoid biosynthesis, converts 2-arachidonoyl lysophopholipids to prostanoid lysophopholipids, which are then hydrolyzed by intracellular phospholipases to release free prostanoids. Metabolizes 2-arachidonoyl glycerol yielding the glyceryl ester of PGH2, a process that can contribute to pain response. Generates lipid mediators from n-3 and n-6 polyunsaturated fatty acids (PUFAs) via a lipoxygenase-type mechanism. Oxygenates PUFAs to hydroperoxy compounds and then reduces them to corresponding alcohols. Plays a role in the generation of resolution phase interaction products (resolvins) during both sterile and infectious inflammation. Metabolizes docosahexaenoate (DHA, C22:6(n-3)) to 17R-HDHA, a precursor of the D-series resolvins (RvDs). As a component of the biosynthetic pathway of E-series resolvins (RvEs), converts eicosapentaenoate (EPA, C20:5(n-3)) primarily to 18S-HEPE that is further metabolized by ALOX5 and LTA4H to generate 18S-RvE1 and 18S-RvE2. In vascular endothelial cells, converts docosapentaenoate (DPA, C22:5(n-3)) to 13R-HDPA, a precursor for 13-series resolvins (RvTs) shown to activate macrophage phagocytosis during bacterial infection. In activated leukocytes, contributes to oxygenation of hydroxyeicosatetraenoates (HETE) to diHETES (5,15-diHETE and 5,11-diHETE). Can also use linoleate (LA, (9Z,12Z)-octadecadienoate, C18:2(n-6)) as substrate and produce hydroxyoctadecadienoates (HODEs) in a regio- and stereospecific manner,being (9R)-HODE ((9R)-hydroxy-(10E,12Z)-octadecadienoate) and (13S)-HODE ((13S)-hydroxy-(9Z,11E)-octadecadienoate) its major products. During neuroinflammation, plays a role in neuronal secretion of specialized preresolving mediators (SPMs) 15R-lipoxin A4 that regulates phagocytic microglia. This is Prostaglandin G/H synthase 2 (PTGS2) from Oryctolagus cuniculus (Rabbit).